Here is a 319-residue protein sequence, read N- to C-terminus: Putative peptide permease protein BRA0408/BS1330_II0405 (319 aa).

A run of 6 helical transmembrane segments spans residues 9-29, 102-122, 138-158, 182-202, 242-262, and 284-304; these read LLIG…LLQL, LLLM…TGII, LALL…LYVF, LLRH…ALIM, LPVV…AIFI, and YPVI…VNIL. In terms of domain architecture, ABC transmembrane type-1 spans 98 to 305; that stretch reads IGPTLLLMAA…ACVIIVNILT (208 aa).

Belongs to the binding-protein-dependent transport system permease family. As to quaternary structure, the complex is composed of two ATP-binding proteins (BRA0404 and BRA0405), two transmembrane proteins (BRA0407 and BRA0408) and a solute-binding protein (BRA0409).

The protein localises to the cell inner membrane. Its function is as follows. Probably part of an ABC transporter complex that could be involved in peptide import. Probably responsible for the translocation of the substrate across the membrane. The sequence is that of Putative peptide permease protein BRA0408/BS1330_II0405 from Brucella suis biovar 1 (strain 1330).